Consider the following 390-residue polypeptide: MASKGSNTDCMSCSVLNWEQVSRLHEVLTEVVPIHGRGNFPTLKITLKDIVQTVRSRLNEAGIAVHDVRLNGSAAGHVLVKDNGLGCKDLDLIFQVSLPSEAEFQLVRDVVLRSLLNFLPEGVSKLKISPVTLKEAYIQKLVKVSTESDRWSLISLSNKHGRNVELKFVDCIRRQFEFSVDSFQIILDSLLFYYDYSENPMSEHFHPTVIGESMYGDFEAAFDHLQNKLIATKNPEEIRGGGLLKYSNLLVRDFRPMDKDEIKTLERYMCSRFFIDFPDILDQQRKLETYLQNHFSKEERSKYDYLMILRRVVNESTVCLMGHERRQTLNLISLLALKVLAEQNIIPNATTVTCYYQPAPYVSDVNFSNYYLANPPVPYSQSYPTWLPCN.

It belongs to the TENT family.

Its subcellular location is the nucleus. The protein localises to the cytoplasm. It is found in the cytoskeleton. The protein resides in the microtubule organizing center. It localises to the centrosome. It carries out the reaction RNA(n) + ATP = RNA(n)-3'-adenine ribonucleotide + diphosphate. Its function is as follows. Catalyzes the transfer of one adenosine molecule from an ATP to an mRNA poly(A) tail bearing a 3'-OH terminal group and enhances mRNA stability and gene expression. The protein is Terminal nucleotidyltransferase 5C of Gallus gallus (Chicken).